The following is a 206-amino-acid chain: Glycerol-3-phosphate acyltransferase 1 (206 aa).

Helical transmembrane passes span 7–27 (LVIGYFLGNILFAMIVTKIFL), 54–74 (ILTCIGDLAKTLAALLIVYFI), 81–101 (DLSFAGLGVVLGHSFPFWNHF), 114–134 (IVFFDWRAGLIALLIGLFLVI), and 155–175 (WINFGWEQGLIFLIATLIMIF).

It belongs to the PlsY family. Probably interacts with PlsX.

The protein localises to the cell membrane. The catalysed reaction is an acyl phosphate + sn-glycerol 3-phosphate = a 1-acyl-sn-glycero-3-phosphate + phosphate. Its pathway is lipid metabolism; phospholipid metabolism. Its function is as follows. Catalyzes the transfer of an acyl group from acyl-phosphate (acyl-PO(4)) to glycerol-3-phosphate (G3P) to form lysophosphatidic acid (LPA). This enzyme utilizes acyl-phosphate as fatty acyl donor, but not acyl-CoA or acyl-ACP. This chain is Glycerol-3-phosphate acyltransferase 1, found in Lactobacillus johnsonii (strain CNCM I-12250 / La1 / NCC 533).